The chain runs to 68 residues: Large ribosomal subunit protein bL31 (68 aa).

This sequence belongs to the bacterial ribosomal protein bL31 family. Type A subfamily. In terms of assembly, part of the 50S ribosomal subunit.

Its function is as follows. Binds the 23S rRNA. This Helicobacter hepaticus (strain ATCC 51449 / 3B1) protein is Large ribosomal subunit protein bL31.